Consider the following 552-residue polypeptide: Ferry endosomal RAB5 effector complex subunit 3 (552 aa).

The interval 383–403 (LKESLDSGNQNGGNDDKTKNA) is disordered.

As to quaternary structure, component of the FERRY complex composed of five subunits, TBCK, PPP1R21, FERRY3, CRYZL1 and GATD1 with a ratio of 1:2:1:2:4, respectively.

It localises to the cytoplasm. It is found in the early endosome. In terms of biological role, component of the FERRY complex (Five-subunit Endosomal Rab5 and RNA/ribosome intermediary). The FERRY complex directly interacts with mRNAs and RAB5A, and functions as a RAB5A effector involved in the localization and the distribution of specific mRNAs most likely by mediating their endosomal transport. The complex recruits mRNAs and ribosomes to early endosomes through direct mRNA-interaction. Plays a role in mast cell degranulation. The protein is Ferry endosomal RAB5 effector complex subunit 3 of Homo sapiens (Human).